An 89-amino-acid polypeptide reads, in one-letter code: UPF0223 protein BPUM_1362 (89 aa).

It belongs to the UPF0223 family.

The protein is UPF0223 protein BPUM_1362 of Bacillus pumilus (strain SAFR-032).